Consider the following 172-residue polypeptide: Large ribosomal subunit protein uL10 (172 aa).

The protein belongs to the universal ribosomal protein uL10 family. As to quaternary structure, part of the ribosomal stalk of the 50S ribosomal subunit. The N-terminus interacts with L11 and the large rRNA to form the base of the stalk. The C-terminus forms an elongated spine to which L12 dimers bind in a sequential fashion forming a multimeric L10(L12)X complex.

Forms part of the ribosomal stalk, playing a central role in the interaction of the ribosome with GTP-bound translation factors. The protein is Large ribosomal subunit protein uL10 of Rhizobium leguminosarum bv. trifolii (strain WSM2304).